Here is a 180-residue protein sequence, read N- to C-terminus: Probable RNA 2'-phosphotransferase (180 aa).

This sequence belongs to the KptA/TPT1 family.

Functionally, removes the 2'-phosphate from RNA via an intermediate in which the phosphate is ADP-ribosylated by NAD followed by a presumed transesterification to release the RNA and generate ADP-ribose 1''-2''-cyclic phosphate (APPR&gt;P). May function as an ADP-ribosylase. The polypeptide is Probable RNA 2'-phosphotransferase (Thermococcus kodakarensis (strain ATCC BAA-918 / JCM 12380 / KOD1) (Pyrococcus kodakaraensis (strain KOD1))).